Here is a 347-residue protein sequence, read N- to C-terminus: NADH-ubiquinone oxidoreductase chain 2 (347 aa).

Transmembrane regions (helical) follow at residues 13-33 (VFTG…WLGL), 55-75 (AAIK…MAIL), 96-116 (LMIV…FWVP), 122-142 (VPLT…ISIM), 151-171 (TNIL…GGLN), 178-198 (ILAY…PYNP), 199-219 (NITI…FLIL), 237-257 (LTWL…LPPL), 277-297 (IAPT…ARLI), and 326-346 (LPTL…ILSI).

It belongs to the complex I subunit 2 family. In terms of assembly, core subunit of respiratory chain NADH dehydrogenase (Complex I) which is composed of 45 different subunits. Interacts with TMEM242.

It is found in the mitochondrion inner membrane. It catalyses the reaction a ubiquinone + NADH + 5 H(+)(in) = a ubiquinol + NAD(+) + 4 H(+)(out). Functionally, core subunit of the mitochondrial membrane respiratory chain NADH dehydrogenase (Complex I) which catalyzes electron transfer from NADH through the respiratory chain, using ubiquinone as an electron acceptor. Essential for the catalytic activity and assembly of complex I. This Pongo pygmaeus (Bornean orangutan) protein is NADH-ubiquinone oxidoreductase chain 2.